The chain runs to 124 residues: Tax1-binding protein 3 (124 aa).

Position 2 is an N-acetylserine (Ser2). The PDZ domain maps to 15–112 (RVEIHKLRQG…EVVRLLVTRQ (98 aa)). At Ser61 the chain carries Phosphoserine.

Interacts (via its PDZ domain) with GLS2. Interacts (via its PDZ domain) with RTKN (via the C-terminal region); this interaction facilitates Rho-mediated activation of the FOS serum response element (SRE). Interacts (via its PDZ domain) with CTNNB1; this interaction inhibits the transcriptional activity of CTNNB1. Interacts with HTLV-1 TAX protein. Interacts (via PDZ domain) with ARHGEF16. Interacts (via PDZ domain) with KCNJ4 (via C-terminus). Competes with LIN7A for KCNJ4 binding. Interacts with ADGRB2. As to expression, ubiquitous. Detected in brain, heart, kidney, lung, small intestine and skeletal muscle. Detected in various cell lines including HeLa. Weakly expressed in peripheral blood leukocytes.

Its subcellular location is the cytoplasm. The protein resides in the nucleus. It is found in the cell membrane. Functionally, may regulate a number of protein-protein interactions by competing for PDZ domain binding sites. Binds CTNNB1 and may thereby act as an inhibitor of the Wnt signaling pathway. Competes with LIN7A for KCNJ4 binding, and thereby promotes KCNJ4 internalization. May play a role in the Rho signaling pathway. May play a role in activation of CDC42 by the viral protein HPV16 E6. In Homo sapiens (Human), this protein is Tax1-binding protein 3.